We begin with the raw amino-acid sequence, 146 residues long: Transcriptional regulator MraZ (146 aa).

2 SpoVT-AbrB domains span residues 4–46 and 75–118; these read SYEK…SKKS and TIEV…SKEK.

This sequence belongs to the MraZ family. Forms oligomers.

It localises to the cytoplasm. The protein localises to the nucleoid. In Mycoplasma mobile (strain ATCC 43663 / 163K / NCTC 11711) (Mesomycoplasma mobile), this protein is Transcriptional regulator MraZ.